The chain runs to 407 residues: MSTRPTVSPSELEQIDLASPVLHAEYELDEIFRHLRADEPVYWQQPRNEQPGFWVISRHADVNEVYKDKEHFTTEHGNALATLLTGGDSASGAMLAVTDGVRHHQVRNVLSRGFSARMLDLIAHTLQETVDGLLLAALERGECDAAQDIAADVPLGAICDLLEIPHADRKYLLGLTSHAWSTDYADEPPEESWVAKNEILLYFSKLLKERRGGVREDMVSLLANCRIDGDPLKAAEQMANCYGLMIGGDETGRHAITGTILALIQNPDQWRALKNGDVDLNTATEEALRWTVPSLHGGRKATGDVVINGRRINAGDVVSVWISSANRDETVFDAPDEFNLARTPNKHFTFAYGSHYCLGHYLGRMEVYAVLDGLRRLVGDLEQIGEERWIYSSILHGMSSLPIRITG.

Cys-357 is a heme binding site.

The protein belongs to the cytochrome P450 family. Heme is required as a cofactor.

The protein operates within antibiotic biosynthesis; novobiocin biosynthesis. Together with NovH, involved in the formation of a beta-OH-Tyr intermediate in the novobiocin biosynthesis pathway, an aminocoumarin family antibiotic that targets bacterial DNA gyrases. Acts as a cytochrome P450-type monooxygenase with specificity for the tyrosyl-S-NovH acyl enzyme (L-Tyr-S-NovH) to form the beta-OH-Tyr intermediate (L-beta-OH-Tyr-S-NovH). This Streptomyces niveus (Streptomyces spheroides) protein is Cytochrome P450 NovI (novI).